The chain runs to 333 residues: Holliday junction branch migration complex subunit RuvB (333 aa).

The large ATPase domain (RuvB-L) stretch occupies residues 1-173 (MTAPENLDAA…FGIIEHLEYY (173 aa)). ATP contacts are provided by residues Leu-11, Arg-12, Gly-53, Lys-56, Thr-57, Thr-58, 120-122 (EDF), Arg-163, Tyr-173, and Arg-210. A Mg(2+)-binding site is contributed by Thr-57. Residues 174-244 (TAEEIATNLL…RAQSALDKLG (71 aa)) form a small ATPAse domain (RuvB-S) region. Positions 247–333 (SAGLDDRDKK…IDDGNGIFLN (87 aa)) are head domain (RuvB-H). Positions 302 and 307 each coordinate DNA.

This sequence belongs to the RuvB family. In terms of assembly, homohexamer. Forms an RuvA(8)-RuvB(12)-Holliday junction (HJ) complex. HJ DNA is sandwiched between 2 RuvA tetramers; dsDNA enters through RuvA and exits via RuvB. An RuvB hexamer assembles on each DNA strand where it exits the tetramer. Each RuvB hexamer is contacted by two RuvA subunits (via domain III) on 2 adjacent RuvB subunits; this complex drives branch migration. In the full resolvosome a probable DNA-RuvA(4)-RuvB(12)-RuvC(2) complex forms which resolves the HJ.

The protein localises to the cytoplasm. The catalysed reaction is ATP + H2O = ADP + phosphate + H(+). Functionally, the RuvA-RuvB-RuvC complex processes Holliday junction (HJ) DNA during genetic recombination and DNA repair, while the RuvA-RuvB complex plays an important role in the rescue of blocked DNA replication forks via replication fork reversal (RFR). RuvA specifically binds to HJ cruciform DNA, conferring on it an open structure. The RuvB hexamer acts as an ATP-dependent pump, pulling dsDNA into and through the RuvAB complex. RuvB forms 2 homohexamers on either side of HJ DNA bound by 1 or 2 RuvA tetramers; 4 subunits per hexamer contact DNA at a time. Coordinated motions by a converter formed by DNA-disengaged RuvB subunits stimulates ATP hydrolysis and nucleotide exchange. Immobilization of the converter enables RuvB to convert the ATP-contained energy into a lever motion, pulling 2 nucleotides of DNA out of the RuvA tetramer per ATP hydrolyzed, thus driving DNA branch migration. The RuvB motors rotate together with the DNA substrate, which together with the progressing nucleotide cycle form the mechanistic basis for DNA recombination by continuous HJ branch migration. Branch migration allows RuvC to scan DNA until it finds its consensus sequence, where it cleaves and resolves cruciform DNA. The protein is Holliday junction branch migration complex subunit RuvB of Deinococcus radiodurans (strain ATCC 13939 / DSM 20539 / JCM 16871 / CCUG 27074 / LMG 4051 / NBRC 15346 / NCIMB 9279 / VKM B-1422 / R1).